Reading from the N-terminus, the 271-residue chain is Zinc finger protein 501 (271 aa).

9 consecutive C2H2-type zinc fingers follow at residues 22 to 44, 50 to 72, 78 to 100, 106 to 128, 134 to 156, 162 to 184, 190 to 212, 218 to 240, and 246 to 268; these read SKCS…QRIH, YVCS…LRIH, YKCN…LRIH, YKCN…QRIH, YKCT…QRSH, FKCN…QRIH, YTCT…ERTH, YKCS…YRIH, and YECV…QRLH.

This sequence belongs to the krueppel C2H2-type zinc-finger protein family.

It is found in the nucleus. The protein localises to the nucleolus. In terms of biological role, may be involved in transcriptional regulation. Essential for Golgi structural integrity. The polypeptide is Zinc finger protein 501 (ZNF501) (Homo sapiens (Human)).